The chain runs to 539 residues: M protein, serotype 24 (539 aa).

The first 42 residues, 1 to 42 (MTKNNTNRHYSLRKLKTGTASVAVALTVLGAGLVVNTNEVSA), serve as a signal peptide directing secretion. Residues 118 to 152 (LEARKADLEKALEGAMNFSTADSAKIKTLEAEKAA) form an A-1 repeat. The 5.3 X 35 AA tandem repeats, A-type stretch occupies residues 118–301 (LEARKADLEK…ALEAEKADLE (184 aa)). One copy of the A-2 repeat lies at 153–187 (LAARKADLEKALEGAMNFSTADSAKIKTLEAEKAA). One copy of the A-3 repeat lies at 188–222 (LEARQAELEKALEGAMNFSTADSAKIKTLEAEKAA). Residues 223–257 (LAARKADLEKALEGAMNFSTADSAKIKTLEAEKAA) form an A-4 repeat. The stretch at 258–292 (LEARQAELEKALEGAMNFSTADSAKIKTLEAEKAA) is one A-5 repeat. One copy of the A-6; truncated repeat lies at 293–297 (LEAEK). The tract at residues 297–401 (KADLEHQSQV…REAKKQVEKA (105 aa)) is disordered. 3 C repeats span residues 298–332 (ADLE…EAEH), 333–367 (QKLE…EAEH), and 368–402 (QKLE…EKAL). Polar residues predominate over residues 303–312 (QSQVLNANRQ). Composition is skewed to basic and acidic residues over residues 314–340 (LRRD…EQNK), 349–375 (LRRD…EQNK), and 384–401 (LRRD…VEKA). 4 D repeats span residues 435-440 (AKLEAE), 441-446 (AKALKE), 449-454 (AKQAEE), and 456-461 (AKLRAG). The segment at 456 to 511 (AKLRAGKASDSQTPDAKPGNKAVPGKGQAPQAGTKPNQNKAPMKETKRQLPSTGET) is disordered. The LPXTG sorting signal signature appears at 505-509 (LPSTG). T508 carries the post-translational modification Pentaglycyl murein peptidoglycan amidated threonine. Positions 509–539 (GETANPFFTAAALTVMATAGVAAVVKRKEEN) are cleaved as a propeptide — removed by sortase.

This sequence belongs to the M protein family.

It localises to the secreted. Its subcellular location is the cell wall. Its function is as follows. This protein is one of the different antigenic serotypes of protein M. Protein M is closely associated with virulence of the bacterium and can render the organism resistant to phagocytosis. The polypeptide is M protein, serotype 24 (emm24) (Streptococcus pyogenes).